Consider the following 128-residue polypeptide: Large ribosomal subunit protein bL19 (128 aa).

The protein belongs to the bacterial ribosomal protein bL19 family.

In terms of biological role, this protein is located at the 30S-50S ribosomal subunit interface and may play a role in the structure and function of the aminoacyl-tRNA binding site. The chain is Large ribosomal subunit protein bL19 from Mesoplasma florum (strain ATCC 33453 / NBRC 100688 / NCTC 11704 / L1) (Acholeplasma florum).